Consider the following 399-residue polypeptide: Enoyl-[acyl-carrier-protein] reductase [NADH] (399 aa).

NAD(+)-binding positions include 48–53 (GASTGY), 74–75 (FE), 111–112 (DA), and 139–140 (LA). Y225 is a binding site for substrate. Y235 functions as the Proton donor in the catalytic mechanism. NAD(+) contacts are provided by residues K244 and 274–276 (VVT).

This sequence belongs to the TER reductase family. In terms of assembly, monomer.

It catalyses the reaction a 2,3-saturated acyl-[ACP] + NAD(+) = a (2E)-enoyl-[ACP] + NADH + H(+). It functions in the pathway lipid metabolism; fatty acid biosynthesis. Its function is as follows. Involved in the final reduction of the elongation cycle of fatty acid synthesis (FAS II). Catalyzes the reduction of a carbon-carbon double bond in an enoyl moiety that is covalently linked to an acyl carrier protein (ACP). In Yersinia pestis bv. Antiqua (strain Antiqua), this protein is Enoyl-[acyl-carrier-protein] reductase [NADH].